The sequence spans 217 residues: ATP phosphoribosyltransferase (217 aa).

Belongs to the ATP phosphoribosyltransferase family. Short subfamily. As to quaternary structure, heteromultimer composed of HisG and HisZ subunits.

It is found in the cytoplasm. The catalysed reaction is 1-(5-phospho-beta-D-ribosyl)-ATP + diphosphate = 5-phospho-alpha-D-ribose 1-diphosphate + ATP. It participates in amino-acid biosynthesis; L-histidine biosynthesis; L-histidine from 5-phospho-alpha-D-ribose 1-diphosphate: step 1/9. Functionally, catalyzes the condensation of ATP and 5-phosphoribose 1-diphosphate to form N'-(5'-phosphoribosyl)-ATP (PR-ATP). Has a crucial role in the pathway because the rate of histidine biosynthesis seems to be controlled primarily by regulation of HisG enzymatic activity. In Synechococcus sp. (strain WH7803), this protein is ATP phosphoribosyltransferase.